We begin with the raw amino-acid sequence, 302 residues long: Protease HtpX homolog (302 aa).

The chain crosses the membrane as a helical span at residues 27 to 47 (LLMAIGGIIGGTAGMLIALII). H141 serves as a coordination point for Zn(2+). E142 is an active-site residue. H145 provides a ligand contact to Zn(2+). Transmembrane regions (helical) follow at residues 151 to 171 (VLVA…ANMA) and 195 to 215 (IGAI…QLAI). E220 is a binding site for Zn(2+).

Belongs to the peptidase M48B family. Zn(2+) serves as cofactor.

The protein localises to the cell inner membrane. The polypeptide is Protease HtpX homolog (Aquifex aeolicus (strain VF5)).